The primary structure comprises 491 residues: Nicotinamide phosphoribosyltransferase (491 aa).

Residue methionine 1 is modified to N-acetylmethionine. A Phosphotyrosine modification is found at tyrosine 188. Diphosphate is bound at residue arginine 196. Aspartate 219 contacts beta-nicotinamide D-ribonucleotide. Diphosphate-binding residues include histidine 247 and arginine 311. Residues 311-313, 353-354, glycine 384, and arginine 392 each bind beta-nicotinamide D-ribonucleotide; these read RPD and GD. Residue serine 472 is modified to Phosphoserine.

It belongs to the NAPRTase family. In terms of assembly, homodimer. Expressed in various tissues. At the highest level in liver and at the second highest in heart. The amount is higher in heart than in lung.

The protein localises to the nucleus. Its subcellular location is the cytoplasm. It is found in the secreted. The catalysed reaction is beta-nicotinamide D-ribonucleotide + diphosphate = 5-phospho-alpha-D-ribose 1-diphosphate + nicotinamide + H(+). It participates in cofactor biosynthesis; NAD(+) biosynthesis; nicotinamide D-ribonucleotide from 5-phospho-alpha-D-ribose 1-diphosphate and nicotinamide: step 1/1. Functionally, catalyzes the condensation of nicotinamide with 5-phosphoribosyl-1-pyrophosphate to yield nicotinamide mononucleotide, an intermediate in the biosynthesis of NAD. It is the rate limiting component in the mammalian NAD biosynthesis pathway. The secreted form behaves both as a cytokine with immunomodulating properties and an adipokine with anti-diabetic properties, it has no enzymatic activity, partly because of lack of activation by ATP, which has a low level in extracellular space and plasma. Plays a role in the modulation of circadian clock function. NAMPT-dependent oscillatory production of NAD regulates oscillation of clock target gene expression by releasing the core clock component: CLOCK-BMAL1 heterodimer from NAD-dependent SIRT1-mediated suppression. This chain is Nicotinamide phosphoribosyltransferase (Nampt), found in Rattus norvegicus (Rat).